Consider the following 192-residue polypeptide: Flavin prenyltransferase UbiX (192 aa).

FMN contacts are provided by residues 10–12 (GAS), serine 36, 92–95 (SVAT), and arginine 127. Tyrosine 157 and lysine 173 together coordinate dimethylallyl phosphate.

The protein belongs to the UbiX/PAD1 family.

It carries out the reaction dimethylallyl phosphate + FMNH2 = prenylated FMNH2 + phosphate. Flavin prenyltransferase that catalyzes the synthesis of the prenylated FMN cofactor (prenyl-FMN) for 4-hydroxy-3-polyprenylbenzoic acid decarboxylase UbiD. The prenyltransferase is metal-independent and links a dimethylallyl moiety from dimethylallyl monophosphate (DMAP) to the flavin N5 and C6 atoms of FMN. The polypeptide is Flavin prenyltransferase UbiX (Chlamydia muridarum (strain MoPn / Nigg)).